We begin with the raw amino-acid sequence, 488 residues long: Probable glycine dehydrogenase (decarboxylating) subunit 2 (488 aa).

An N6-(pyridoxal phosphate)lysine modification is found at lysine 274.

It belongs to the GcvP family. C-terminal subunit subfamily. As to quaternary structure, the glycine cleavage system is composed of four proteins: P, T, L and H. In this organism, the P 'protein' is a heterodimer of two subunits. It depends on pyridoxal 5'-phosphate as a cofactor.

The enzyme catalyses N(6)-[(R)-lipoyl]-L-lysyl-[glycine-cleavage complex H protein] + glycine + H(+) = N(6)-[(R)-S(8)-aminomethyldihydrolipoyl]-L-lysyl-[glycine-cleavage complex H protein] + CO2. In terms of biological role, the glycine cleavage system catalyzes the degradation of glycine. The P protein binds the alpha-amino group of glycine through its pyridoxal phosphate cofactor; CO(2) is released and the remaining methylamine moiety is then transferred to the lipoamide cofactor of the H protein. The polypeptide is Probable glycine dehydrogenase (decarboxylating) subunit 2 (Listeria monocytogenes serotype 4b (strain F2365)).